Reading from the N-terminus, the 598-residue chain is NADH-quinone oxidoreductase subunit C/D (598 aa).

Residues 1–189 form an NADH dehydrogenase I subunit C region; that stretch reads MTDLTTSDSL…DPYVLTKQKE (189 aa). The NADH dehydrogenase I subunit D stretch occupies residues 213-598; the sequence is DFMFLNLGPN…IDFVMSDVDR (386 aa).

In the N-terminal section; belongs to the complex I 30 kDa subunit family. This sequence in the C-terminal section; belongs to the complex I 49 kDa subunit family. NDH-1 is composed of 13 different subunits. Subunits NuoB, CD, E, F, and G constitute the peripheral sector of the complex.

It is found in the cell inner membrane. It catalyses the reaction a quinone + NADH + 5 H(+)(in) = a quinol + NAD(+) + 4 H(+)(out). In terms of biological role, NDH-1 shuttles electrons from NADH, via FMN and iron-sulfur (Fe-S) centers, to quinones in the respiratory chain. The immediate electron acceptor for the enzyme in this species is believed to be ubiquinone. Couples the redox reaction to proton translocation (for every two electrons transferred, four hydrogen ions are translocated across the cytoplasmic membrane), and thus conserves the redox energy in a proton gradient. The protein is NADH-quinone oxidoreductase subunit C/D of Yersinia pestis bv. Antiqua (strain Angola).